Here is a 553-residue protein sequence, read N- to C-terminus: MNKNTSTVVSPSLLEKDPAFQMITIAKETGLGLKVLGGINRNEGPLVYIQEIIPGGDCYKDGRLKPGDQLVSVNKESMIGVSFEEAKSIITGAKLRLESAWEIAFIRQKSDNIQPENLSCTSLIEASGEYGPQASTLSLFSSPPEILIPKTSSTPKTNNDILSSCEIKTGYNKTVQIPITSENSTVGLSNTDVASAWTENYGLQEKISLNPSVRFKAEKLEMALNYLGIQPTKEQHQALRQQVQADSKGTVSFGDFVQVARNLFCLQLDEVNVGAHEISNILDSQLLPCDSSEADEMERLKCERDDALKEVNTLKEKLLESDKQRKQLTEELQNVKQEAKAVVEETRALRSRIHLAEAAQRQAHGMEMDYEEVIRLLEAKITELKAQLADYSDQNKESVQDLKKRIMVLDCQLRKSEMARKTFEASTEKLLHFVEAIQEVFSDNSTPLSNLSERRAVLASQTSLTPLGRNGRSIPATLALESKELVKSVRALLDMDCLPYGWEEAYTADGIKYFINHVTQTTSWIHPVMSVLNLSRSEENEEDCSRELPNQKS.

Phosphoserine occurs at positions 10, 12, 99, and 212. The region spanning 19–105 (AFQMITIAKE…RLESAWEIAF (87 aa)) is the PDZ domain. A coiled-coil region spans residues 291 to 417 (SSEADEMERL…VLDCQLRKSE (127 aa)). Residue serine 463 is modified to Phosphoserine. Residues 496–529 (DCLPYGWEEAYTADGIKYFINHVTQTTSWIHPVM) enclose the WW domain.

As to quaternary structure, interacts with STX4A. In terms of processing, phosphorylated on Ser-99 by PKB/AKT2 after insulin treatment. Phosphorylation on Ser-99 abolishes the interaction with STX4A.

The protein localises to the cytoplasm. Plays a role in the translocation of transport vesicles from the cytoplasm to the plasma membrane. Inhibits the translocation of SLC2A4 from intracellular vesicles to the plasma membrane by STX4A binding and preventing the interaction between STX4A and VAMP2. Stimulation with insulin disrupts the interaction with STX4A, leading to increased levels of SLC2A4 at the plasma membrane. May also play a role in the regulation of insulin release by pancreatic beta cells after stimulation by glucose. This Homo sapiens (Human) protein is Syntaxin-binding protein 4 (STXBP4).